The following is a 648-amino-acid chain: Fidgetin-like protein 2 (648 aa).

The disordered stretch occupies residues methionine 1–proline 36. Positions proline 10–serine 27 are enriched in polar residues. ATP-binding positions include alanine 394 and glycine 434 to leucine 439.

This sequence belongs to the AAA ATPase family. Mg(2+) is required as a cofactor.

It localises to the cytoplasm. Its subcellular location is the cell cortex. The catalysed reaction is ATP + H2O = ADP + phosphate + H(+). Microtubule-severing enzyme that negatively regulates cell migration and wound healing. In migrating cells, targets dynamic microtubules (MTs) at the leading edge and severs them, thereby suppressing motility. Microtubule severing releases ARHGEF2 which activates RHOA, which in turn regulates focal ahesion turnover via focal adhesion kinase, as opposed to F-actin polymerization, to suppress cell motility. Negative regulator of axon regeneration that suppresses axonal growth by selectively severing dynamic MTs in the distal axon shaft and growth cone. Contributes to proper cell branching during endothelial and neuronal development. This is Fidgetin-like protein 2 (Fignl2) from Rattus norvegicus (Rat).